The chain runs to 568 residues: Matrix metalloproteinase-21 (568 aa).

The N-terminal stretch at 1 to 24 (MLAASVLRLTLPLCWLVAPQPTQP) is a signal peptide. A propeptide spanning residues 25-143 (ERLFHSRDRS…SLGLRPRARQ (119 aa)) is cleaved from the precursor. A Cysteine switch motif is present at residues 110–117 (PRCGVPDT). 2 residues coordinate Zn(2+): Cys-112 and His-282. Glu-283 is a catalytic residue. The Zn(2+) site is built by His-286 and His-292. Cys-328 and Cys-559 form a disulfide bridge. Hemopexin repeat units lie at residues 329–388 (KGSF…WRGI), 390–446 (TQSI…FPGI), 447–495 (PSPL…FPAI), and 502–558 (FRNL…WFDV). Asn-371 is a glycosylation site (N-linked (GlcNAc...) asparagine).

The protein belongs to the peptidase M10A family. Zn(2+) is required as a cofactor. Ca(2+) serves as cofactor. In terms of processing, the precursor is cleaved by a furin endopeptidase.

Its subcellular location is the secreted. Functionally, plays a specialized role in the generation of left-right asymmetry during embryogenesis. May act as a negative regulator of the NOTCH-signaling pathway. Cleaves alpha-1-antitrypsin. This is Matrix metalloproteinase-21 (Mmp21) from Mus musculus (Mouse).